We begin with the raw amino-acid sequence, 144 residues long: Large ribosomal subunit protein uL15 (144 aa).

The segment at 1–53 is disordered; it reads MYLNTLAPAEGAKHSAKRLGRGIGSGLGKTGGRGHKGQKSRTGGGVRRGFEGG. Gly residues predominate over residues 21-31; it reads RGIGSGLGKTG.

The protein belongs to the universal ribosomal protein uL15 family. In terms of assembly, part of the 50S ribosomal subunit.

Its function is as follows. Binds to the 23S rRNA. The polypeptide is Large ribosomal subunit protein uL15 (Mannheimia succiniciproducens (strain KCTC 0769BP / MBEL55E)).